Consider the following 308-residue polypeptide: Aspartate carbamoyltransferase catalytic subunit (308 aa).

The carbamoyl phosphate site is built by arginine 55 and threonine 56. Lysine 83 is a binding site for L-aspartate. Carbamoyl phosphate is bound by residues arginine 105, histidine 133, and glutamine 136. Residues arginine 166 and arginine 220 each coordinate L-aspartate. Carbamoyl phosphate is bound by residues glycine 261 and proline 262.

This sequence belongs to the aspartate/ornithine carbamoyltransferase superfamily. ATCase family. As to quaternary structure, heterododecamer (2C3:3R2) of six catalytic PyrB chains organized as two trimers (C3), and six regulatory PyrI chains organized as three dimers (R2).

It catalyses the reaction carbamoyl phosphate + L-aspartate = N-carbamoyl-L-aspartate + phosphate + H(+). The protein operates within pyrimidine metabolism; UMP biosynthesis via de novo pathway; (S)-dihydroorotate from bicarbonate: step 2/3. Catalyzes the condensation of carbamoyl phosphate and aspartate to form carbamoyl aspartate and inorganic phosphate, the committed step in the de novo pyrimidine nucleotide biosynthesis pathway. The chain is Aspartate carbamoyltransferase catalytic subunit from Chlorobaculum parvum (strain DSM 263 / NCIMB 8327) (Chlorobium vibrioforme subsp. thiosulfatophilum).